We begin with the raw amino-acid sequence, 146 residues long: Large ribosomal subunit protein uL15 (146 aa).

A compositionally biased stretch (basic and acidic residues) spans 1 to 13; that stretch reads MKLHELKPAEGSR. The disordered stretch occupies residues 1–57; sequence MKLHELKPAEGSRKVRNRVGRGTSSGNGKTSGRGQKGQKARSGVGLRPGFEGGQTPL. Residues 23-35 show a composition bias toward gly residues; the sequence is TSSGNGKTSGRGQ.

The protein belongs to the universal ribosomal protein uL15 family. Part of the 50S ribosomal subunit.

Binds to the 23S rRNA. The chain is Large ribosomal subunit protein uL15 from Streptococcus thermophilus (strain ATCC BAA-491 / LMD-9).